We begin with the raw amino-acid sequence, 320 residues long: Aspartate carbamoyltransferase catalytic subunit (320 aa).

Carbamoyl phosphate-binding residues include Arg-68 and Thr-69. Lys-96 provides a ligand contact to L-aspartate. The carbamoyl phosphate site is built by Arg-118, His-148, and Gln-151. Arg-181 and Arg-236 together coordinate L-aspartate. The carbamoyl phosphate site is built by Gly-277 and Pro-278.

The protein belongs to the aspartate/ornithine carbamoyltransferase superfamily. ATCase family. As to quaternary structure, heterododecamer (2C3:3R2) of six catalytic PyrB chains organized as two trimers (C3), and six regulatory PyrI chains organized as three dimers (R2).

It carries out the reaction carbamoyl phosphate + L-aspartate = N-carbamoyl-L-aspartate + phosphate + H(+). It functions in the pathway pyrimidine metabolism; UMP biosynthesis via de novo pathway; (S)-dihydroorotate from bicarbonate: step 2/3. Catalyzes the condensation of carbamoyl phosphate and aspartate to form carbamoyl aspartate and inorganic phosphate, the committed step in the de novo pyrimidine nucleotide biosynthesis pathway. The chain is Aspartate carbamoyltransferase catalytic subunit from Acidovorax ebreus (strain TPSY) (Diaphorobacter sp. (strain TPSY)).